The chain runs to 485 residues: tRNA sulfurtransferase (485 aa).

The THUMP domain occupies 63 to 167; it reads DKLVERLSCM…NELLYLVTAI (105 aa). Residues 185–186, lysine 267, glycine 289, and glutamine 298 each bind ATP; that span reads LI. Cysteine 346 and cysteine 458 are disulfide-bonded. One can recognise a Rhodanese domain in the interval 406–485; sequence LAENEVILDI…FNNIKVYRQN (80 aa). The active-site Cysteine persulfide intermediate is the cysteine 458.

This sequence belongs to the ThiI family.

The protein resides in the cytoplasm. It catalyses the reaction [ThiI sulfur-carrier protein]-S-sulfanyl-L-cysteine + a uridine in tRNA + 2 reduced [2Fe-2S]-[ferredoxin] + ATP + H(+) = [ThiI sulfur-carrier protein]-L-cysteine + a 4-thiouridine in tRNA + 2 oxidized [2Fe-2S]-[ferredoxin] + AMP + diphosphate. It carries out the reaction [ThiS sulfur-carrier protein]-C-terminal Gly-Gly-AMP + S-sulfanyl-L-cysteinyl-[cysteine desulfurase] + AH2 = [ThiS sulfur-carrier protein]-C-terminal-Gly-aminoethanethioate + L-cysteinyl-[cysteine desulfurase] + A + AMP + 2 H(+). It functions in the pathway cofactor biosynthesis; thiamine diphosphate biosynthesis. In terms of biological role, catalyzes the ATP-dependent transfer of a sulfur to tRNA to produce 4-thiouridine in position 8 of tRNAs, which functions as a near-UV photosensor. Also catalyzes the transfer of sulfur to the sulfur carrier protein ThiS, forming ThiS-thiocarboxylate. This is a step in the synthesis of thiazole, in the thiamine biosynthesis pathway. The sulfur is donated as persulfide by IscS. This chain is tRNA sulfurtransferase, found in Tolumonas auensis (strain DSM 9187 / NBRC 110442 / TA 4).